The chain runs to 91 residues: Small ribosomal subunit protein bS16 (91 aa).

It belongs to the bacterial ribosomal protein bS16 family.

The protein is Small ribosomal subunit protein bS16 of Levilactobacillus brevis (strain ATCC 367 / BCRC 12310 / CIP 105137 / JCM 1170 / LMG 11437 / NCIMB 947 / NCTC 947) (Lactobacillus brevis).